Here is a 216-residue protein sequence, read N- to C-terminus: Large ribosomal subunit protein eL15 (216 aa).

The protein belongs to the eukaryotic ribosomal protein eL15 family.

This is Large ribosomal subunit protein eL15 from Metallosphaera sedula (strain ATCC 51363 / DSM 5348 / JCM 9185 / NBRC 15509 / TH2).